Here is a 114-residue protein sequence, read N- to C-terminus: MVLPALPAPPVCDSQNECVGWLGVAYSAVVDVIRAAAHEGVYIEPEARGRLDALREWIYYNYYTERAKRRDRRRRSVCHARTWFCFRKYDYVRRSIWHDTTTNTISVVSAHSVQ.

The Nuclear localization signal motif lies at 66–75 (RAKRRDRRRR).

The protein belongs to the adenoviridae E4 ORF4 family. As to quaternary structure, interacts with host BAZ1A/ACF1, host PPP2R2A/PP2a-B55alpha subunit, and host PPP2R5E/PP2a-B'B56 subunit. May interact with host SRC. In terms of processing, may be phosphorylated by host SRC kinase.

It is found in the host nucleus. The protein localises to the host cytoplasm. Functionally, plays a role in viral alternative pre-mRNA splicing. Activates dephosphorylation by protein phosphatase 2A of host SR proteins and converts their splicing properties. When expressed alone ex vivo, induces p53/TP53-independent apoptosis called cytoplasmic death. May mimic nutrient/growth signals to activate the host mTOR pathway. This chain is Early 4 ORF4 protein, found in Homo sapiens (Human).